We begin with the raw amino-acid sequence, 225 residues long: NAD(P)H-quinone oxidoreductase subunit K, chloroplastic (225 aa).

Positions 43, 44, 108, and 139 each coordinate [4Fe-4S] cluster.

It belongs to the complex I 20 kDa subunit family. As to quaternary structure, NDH is composed of at least 16 different subunits, 5 of which are encoded in the nucleus. Requires [4Fe-4S] cluster as cofactor.

Its subcellular location is the plastid. The protein resides in the chloroplast thylakoid membrane. The enzyme catalyses a plastoquinone + NADH + (n+1) H(+)(in) = a plastoquinol + NAD(+) + n H(+)(out). It catalyses the reaction a plastoquinone + NADPH + (n+1) H(+)(in) = a plastoquinol + NADP(+) + n H(+)(out). Functionally, NDH shuttles electrons from NAD(P)H:plastoquinone, via FMN and iron-sulfur (Fe-S) centers, to quinones in the photosynthetic chain and possibly in a chloroplast respiratory chain. The immediate electron acceptor for the enzyme in this species is believed to be plastoquinone. Couples the redox reaction to proton translocation, and thus conserves the redox energy in a proton gradient. The sequence is that of NAD(P)H-quinone oxidoreductase subunit K, chloroplastic from Eucalyptus globulus subsp. globulus (Tasmanian blue gum).